A 31-amino-acid polypeptide reads, in one-letter code: Photosystem II reaction center protein T (31 aa).

Residues 3-23 (SVAYIVVLTMALAVLFFAIAF) form a helical membrane-spanning segment.

Belongs to the PsbT family. In terms of assembly, PSII is composed of 1 copy each of membrane proteins PsbA, PsbB, PsbC, PsbD, PsbE, PsbF, PsbH, PsbI, PsbJ, PsbK, PsbL, PsbM, PsbT, PsbX, PsbY, PsbZ, Psb30/Ycf12, peripheral proteins PsbO, CyanoQ (PsbQ), PsbU, PsbV and a large number of cofactors. It forms dimeric complexes.

It is found in the cellular thylakoid membrane. Its function is as follows. Found at the monomer-monomer interface of the photosystem II (PS II) dimer, plays a role in assembly and dimerization of PSII. PSII is a light-driven water plastoquinone oxidoreductase, using light energy to abstract electrons from H(2)O, generating a proton gradient subsequently used for ATP formation. The sequence is that of Photosystem II reaction center protein T from Crocosphaera subtropica (strain ATCC 51142 / BH68) (Cyanothece sp. (strain ATCC 51142)).